A 568-amino-acid polypeptide reads, in one-letter code: Urease subunit alpha (568 aa).

The 439-residue stretch at 130 to 568 folds into the Urease domain; the sequence is GGIDTHIHFI…LPMAQRYFLF (439 aa). Ni(2+) is bound by residues histidine 135, histidine 137, and lysine 218. Residue lysine 218 is modified to N6-carboxylysine. Histidine 220 lines the substrate pocket. 2 residues coordinate Ni(2+): histidine 247 and histidine 273. The Proton donor role is filled by histidine 321. Aspartate 361 provides a ligand contact to Ni(2+).

This sequence belongs to the metallo-dependent hydrolases superfamily. Urease alpha subunit family. As to quaternary structure, heterotrimer of UreA (gamma), UreB (beta) and UreC (alpha) subunits. Three heterotrimers associate to form the active enzyme. Requires Ni cation as cofactor. In terms of processing, carboxylation allows a single lysine to coordinate two nickel ions.

The protein resides in the cytoplasm. The catalysed reaction is urea + 2 H2O + H(+) = hydrogencarbonate + 2 NH4(+). It participates in nitrogen metabolism; urea degradation; CO(2) and NH(3) from urea (urease route): step 1/1. The sequence is that of Urease subunit alpha from Burkholderia ambifaria (strain ATCC BAA-244 / DSM 16087 / CCUG 44356 / LMG 19182 / AMMD) (Burkholderia cepacia (strain AMMD)).